An 85-amino-acid polypeptide reads, in one-letter code: High-potential iron-sulfur protein (85 aa).

Residues Cys43, Cys46, Cys63, and Cys77 each coordinate [4Fe-4S] cluster.

It belongs to the high-potential iron-sulfur protein (HiPIP) family. As to quaternary structure, homodimer.

The protein resides in the periplasm. Functionally, specific class of high-redox-potential 4Fe-4S ferredoxins. Functions in anaerobic electron transport in most purple and in some other photosynthetic bacteria and in at least one genus (Paracoccus) of halophilic, denitrifying bacteria. The sequence is that of High-potential iron-sulfur protein from Allochromatium warmingii (Chromatium warmingii).